A 171-amino-acid chain; its full sequence is 3-hydroxydecanoyl-[acyl-carrier-protein] dehydratase (171 aa).

Histidine 70 is an active-site residue.

This sequence belongs to the thioester dehydratase family. FabA subfamily. In terms of assembly, homodimer.

It is found in the cytoplasm. The catalysed reaction is a (3R)-hydroxyacyl-[ACP] = a (2E)-enoyl-[ACP] + H2O. It carries out the reaction (3R)-hydroxydecanoyl-[ACP] = (2E)-decenoyl-[ACP] + H2O. It catalyses the reaction (2E)-decenoyl-[ACP] = (3Z)-decenoyl-[ACP]. Its pathway is lipid metabolism; fatty acid biosynthesis. In terms of biological role, necessary for the introduction of cis unsaturation into fatty acids. Catalyzes the dehydration of (3R)-3-hydroxydecanoyl-ACP to E-(2)-decenoyl-ACP and then its isomerization to Z-(3)-decenoyl-ACP. Can catalyze the dehydratase reaction for beta-hydroxyacyl-ACPs with saturated chain lengths up to 16:0, being most active on intermediate chain length. The sequence is that of 3-hydroxydecanoyl-[acyl-carrier-protein] dehydratase from Xanthomonas oryzae pv. oryzae (strain MAFF 311018).